Consider the following 346-residue polypeptide: Structure-specific endonuclease subunit SLX1 (346 aa).

Residues 10–92 (ALYCVYILRS…TNPHTSLHIP (83 aa)) form the GIY-YIG domain. The segment at 238 to 296 (CVVCKEEIDPEEGGLHAVCSNEGCEGVGHLRCWGRYLLKSEEGGGEGAILPVGGRCPRC) adopts an SLX1-type zinc-finger fold. Residues 324–336 (KVKRKRAPRKKTA) show a composition bias toward basic residues. Residues 324–346 (KVKRKRAPRKKTAKTKETREEDG) are disordered. Positions 337 to 346 (KTKETREEDG) are enriched in basic and acidic residues.

The protein belongs to the SLX1 family. In terms of assembly, forms a heterodimer with SLX4. Requires a divalent metal cation as cofactor.

The protein resides in the nucleus. Catalytic subunit of the SLX1-SLX4 structure-specific endonuclease that resolves DNA secondary structures generated during DNA repair and recombination. Has endonuclease activity towards branched DNA substrates, introducing single-strand cuts in duplex DNA close to junctions with ss-DNA. This is Structure-specific endonuclease subunit SLX1 from Podospora anserina (strain S / ATCC MYA-4624 / DSM 980 / FGSC 10383) (Pleurage anserina).